Reading from the N-terminus, the 359-residue chain is uncharacterized protein (359 aa).

Over residues 73–88 (AATAGTTPATGASGSA) the composition is skewed to low complexity. The tract at residues 73-93 (AATAGTTPATGASGSARPTDA) is disordered. Residues 179-354 (PSTCRGDNVS…AFSAAIQAGE (176 aa)) form the Macro domain.

This is an uncharacterized protein from Mycobacterium tuberculosis (strain ATCC 25618 / H37Rv).